A 149-amino-acid polypeptide reads, in one-letter code: 3-dehydroquinate dehydratase (149 aa).

Catalysis depends on Tyr-22, which acts as the Proton acceptor. Asn-74, His-80, and Asp-87 together coordinate substrate. His-100 serves as the catalytic Proton donor. Residues 101–102 and Arg-111 each bind substrate; that span reads LS.

It belongs to the type-II 3-dehydroquinase family. As to quaternary structure, homododecamer.

It carries out the reaction 3-dehydroquinate = 3-dehydroshikimate + H2O. It functions in the pathway metabolic intermediate biosynthesis; chorismate biosynthesis; chorismate from D-erythrose 4-phosphate and phosphoenolpyruvate: step 3/7. Functionally, catalyzes a trans-dehydration via an enolate intermediate. In Vesicomyosocius okutanii subsp. Calyptogena okutanii (strain HA), this protein is 3-dehydroquinate dehydratase.